A 350-amino-acid chain; its full sequence is Phosphotriesterase-related protein (350 aa).

Residues H22, H24, E169, H201, H230, and D298 each contribute to the a divalent metal cation site.

The protein belongs to the metallo-dependent hydrolases superfamily. Phosphotriesterase family. A divalent metal cation serves as cofactor.

This is Phosphotriesterase-related protein from Drosophila sechellia (Fruit fly).